Reading from the N-terminus, the 83-residue chain is Cytochrome b559 subunit alpha (83 aa).

Residues 21 to 35 traverse the membrane as a helical segment; the sequence is VIHSITIPSLFIAGW. His23 serves as a coordination point for heme.

This sequence belongs to the PsbE/PsbF family. Heterodimer of an alpha subunit and a beta subunit. PSII is composed of 1 copy each of membrane proteins PsbA, PsbB, PsbC, PsbD, PsbE, PsbF, PsbH, PsbI, PsbJ, PsbK, PsbL, PsbM, PsbT, PsbX, PsbY, PsbZ, Psb30/Ycf12, at least 3 peripheral proteins of the oxygen-evolving complex and a large number of cofactors. It forms dimeric complexes. The cofactor is heme b.

The protein localises to the plastid. Its subcellular location is the chloroplast thylakoid membrane. Its function is as follows. This b-type cytochrome is tightly associated with the reaction center of photosystem II (PSII). PSII is a light-driven water:plastoquinone oxidoreductase that uses light energy to abstract electrons from H(2)O, generating O(2) and a proton gradient subsequently used for ATP formation. It consists of a core antenna complex that captures photons, and an electron transfer chain that converts photonic excitation into a charge separation. The chain is Cytochrome b559 subunit alpha from Acorus calamus (Sweet flag).